Consider the following 65-residue polypeptide: Protein YSY6 (65 aa).

A helical membrane pass occupies residues 45–65 (LGILLFLLVGGGVLQLISYIL).

The protein belongs to the RAMP4 family.

It is found in the membrane. It localises to the endoplasmic reticulum membrane. Functionally, interacts with target proteins during their translocation into the lumen of the endoplasmic reticulum. Protects unfolded target proteins against degradation during ER stress. May facilitate glycosylation of target proteins after termination of ER stress. The sequence is that of Protein YSY6 (YSY6) from Saccharomyces cerevisiae (strain ATCC 204508 / S288c) (Baker's yeast).